The chain runs to 360 residues: DNA replication and repair protein RecF (360 aa).

Residue 30-37 participates in ATP binding; that stretch reads GANGSGKT.

The protein belongs to the RecF family.

Its subcellular location is the cytoplasm. The RecF protein is involved in DNA metabolism; it is required for DNA replication and normal SOS inducibility. RecF binds preferentially to single-stranded, linear DNA. It also seems to bind ATP. The chain is DNA replication and repair protein RecF from Acinetobacter baumannii (strain AB307-0294).